A 450-amino-acid chain; its full sequence is Signal recognition particle 54 kDa protein (450 aa).

GTP is bound by residues Gly107 to Thr114, Asp188 to Arg192, and Thr247 to Asp250.

This sequence belongs to the GTP-binding SRP family. SRP54 subfamily. Part of the signal recognition particle protein translocation system, which is composed of SRP and FtsY. Archaeal SRP consists of a 7S RNA molecule of 300 nucleotides and two protein subunits: SRP54 and SRP19.

The protein localises to the cytoplasm. It catalyses the reaction GTP + H2O = GDP + phosphate + H(+). Involved in targeting and insertion of nascent membrane proteins into the cytoplasmic membrane. Binds to the hydrophobic signal sequence of the ribosome-nascent chain (RNC) as it emerges from the ribosomes. The SRP-RNC complex is then targeted to the cytoplasmic membrane where it interacts with the SRP receptor FtsY. The protein is Signal recognition particle 54 kDa protein of Methanococcus maripaludis (strain C5 / ATCC BAA-1333).